A 197-amino-acid polypeptide reads, in one-letter code: NADH-quinone oxidoreductase subunit C (197 aa).

This sequence belongs to the complex I 30 kDa subunit family. In terms of assembly, NDH-1 is composed of 14 different subunits. Subunits NuoB, C, D, E, F, and G constitute the peripheral sector of the complex.

The protein localises to the cell inner membrane. It catalyses the reaction a quinone + NADH + 5 H(+)(in) = a quinol + NAD(+) + 4 H(+)(out). Functionally, NDH-1 shuttles electrons from NADH, via FMN and iron-sulfur (Fe-S) centers, to quinones in the respiratory chain. The immediate electron acceptor for the enzyme in this species is believed to be ubiquinone. Couples the redox reaction to proton translocation (for every two electrons transferred, four hydrogen ions are translocated across the cytoplasmic membrane), and thus conserves the redox energy in a proton gradient. The chain is NADH-quinone oxidoreductase subunit C from Neisseria gonorrhoeae (strain ATCC 700825 / FA 1090).